We begin with the raw amino-acid sequence, 701 residues long: Polyribonucleotide nucleotidyltransferase (701 aa).

Residues D483 and D489 each coordinate Mg(2+). Residues 550 to 609 (PRIYTLHIPTDKIRDVIGPGGKVIRGIIEQTGVKIDVEDDGTIHVASADEASANKAIQII) form the KH domain. The 68-residue stretch at 619–686 (GKTYLGKVVR…EGNKIKLSRK (68 aa)) folds into the S1 motif domain.

It belongs to the polyribonucleotide nucleotidyltransferase family. The cofactor is Mg(2+).

Its subcellular location is the cytoplasm. The catalysed reaction is RNA(n+1) + phosphate = RNA(n) + a ribonucleoside 5'-diphosphate. In terms of biological role, involved in mRNA degradation. Catalyzes the phosphorolysis of single-stranded polyribonucleotides processively in the 3'- to 5'-direction. The protein is Polyribonucleotide nucleotidyltransferase of Solibacter usitatus (strain Ellin6076).